The sequence spans 214 residues: Adenylate kinase (214 aa).

10 to 15 provides a ligand contact to ATP; the sequence is GGGKGT. The interval 30 to 59 is NMP; the sequence is STGDMFRENVKGGTELGLKAKEYMDAGQLV. AMP contacts are provided by residues T31, R36, 57–59, 85–88, and Q92; these read QLV and GFPR. Positions 126 to 163 are LID; that stretch reads GRRVCRVCGATFHVLFNAPKEDGKCDKCGGELYQRSDD. Residue R127 coordinates ATP. Zn(2+)-binding residues include C130 and C133. 136 to 137 lines the ATP pocket; the sequence is TF. C150 and C153 together coordinate Zn(2+). 2 residues coordinate AMP: R160 and R171. Position 199 (Q199) interacts with ATP.

The protein belongs to the adenylate kinase family. In terms of assembly, monomer.

The protein resides in the cytoplasm. It catalyses the reaction AMP + ATP = 2 ADP. Its pathway is purine metabolism; AMP biosynthesis via salvage pathway; AMP from ADP: step 1/1. In terms of biological role, catalyzes the reversible transfer of the terminal phosphate group between ATP and AMP. Plays an important role in cellular energy homeostasis and in adenine nucleotide metabolism. The protein is Adenylate kinase of Desulforudis audaxviator (strain MP104C).